Reading from the N-terminus, the 1103-residue chain is MSTPKAEPVPIPGPRGVPLMGNILDIESEIPLRSLEMMADTYGPIYRLTTFGFSRCMISSHELAAEVFDEERFTKKIMAGLSELRHGIHDGLFTAHMGEENWEIAHRVLMPAFGPLNIQNMFDEMHDIATQLVMKWARQGPKQKIMVTDDFTRLTLDTIALCAMGTRFNSFYSEEMHPFVDAMVGMLKTAGDRSRRPGLVNNLPTTENNKYWEDIDYLRNLCKELVDTRKKNPTDKKDLLNALINGRDPKTGKGMSYDSIIDNMITFLIAGHETTSGSLSFAFYNMLKNPQAYQKAQEEVDRVIGRRRITVEDLQKLPYITAVMRETLRLTPTAPAIAVGPHPTKNHEDPVTLGNGKYVLGKDEPCALLLGKIQRDPKVYGPDAEEFKPERMLDEHFNKLPKHAWKPFGNGMRACIGRPFAWQEALLVIAMLLQNFNFQMDDPSYNIQLKQTLTIKPNHFYMRAALREGLDAVHLGSALSASSSEHADHAAGHGKAGAAKKGADLKPMHVYYGSNTGTCEAFARRLADDATSYGYSAEVESLDSAKDSIPKNGPVVFITASYEGQPPDNAAHFFEWLSALKGDKPLDGVNYAVFGCGHHDWQTTFYRIPKEVNRLVGENGANRLCEIGLADTANADIVTDFDTWGETSFWPAVAAKFGSNTQGSQKSSTFRVEVSSGHRATTLGLQLQEGLVVENTLLTQAGVPAKRTIRFKLPTDTQYKCGDYLAILPVNPSTVVRKVMSRFDLPWDAVLRIEKASPSSSKHISIPMDTQVSAYDLFATYVELSQPASKRDLAVLADAAAVDPETQAELQAIASDPARFAEISQKRISVLDLLLQYPSINLAIGDFVAMLPPMRVRQYSISSSPLVDPTECSITFSVLKAPSLAALTKEDEYLGVASTYLSELRSGERVQLSVRPSHTGFKPPTELSTPMIMACAGSGLAPFRGFVMDRAEKIRGRRSSGSMPEQPAKAILYAGCRTQGKDDIHADELAEWEKIGAVEVRRAYSRPSDGSKGTHVQDLMMEDKKELIDLFESGARIYVCGTPGVGNAVRDSIKSMFLERREEIRRIAKEKGEPVSDDDEETAFEKFLDDMKTKERYTTDIFA.

Residues methionine 1–alanine 491 are cytochrome P450. Residue cysteine 415 coordinates heme. The tract at residues glycine 492 to alanine 1103 is NADPH--P450 reductase. The Flavodoxin-like domain maps to methionine 508–phenylalanine 649. FMN-binding positions include serine 514 to cysteine 519, serine 561 to glycine 564, cysteine 596, and threonine 604. In terms of domain architecture, FAD-binding FR-type spans leucine 685–proline 924.

It in the N-terminal section; belongs to the cytochrome P450 family. Requires heme as cofactor. FAD serves as cofactor. FMN is required as a cofactor.

The catalysed reaction is 2 oxidized [cytochrome P450] + NADPH = 2 reduced [cytochrome P450] + NADP(+) + H(+). It catalyses the reaction an organic molecule + reduced [NADPH--hemoprotein reductase] + O2 = an alcohol + oxidized [NADPH--hemoprotein reductase] + H2O + H(+). In terms of biological role, functions as a fatty acid monooxygenase. Also displays a NADPH-dependent reductase activity in the C-terminal domain, which allows electron transfer from NADPH to the heme iron of the cytochrome P450 N-terminal domain. The polypeptide is Bifunctional cytochrome P450/NADPH--P450 reductase (Aspergillus oryzae (strain ATCC 42149 / RIB 40) (Yellow koji mold)).